Here is a 132-residue protein sequence, read N- to C-terminus: Small ribosomal subunit protein uS8 (132 aa).

The protein belongs to the universal ribosomal protein uS8 family. In terms of assembly, part of the 30S ribosomal subunit. Contacts proteins S5 and S12.

Its function is as follows. One of the primary rRNA binding proteins, it binds directly to 16S rRNA central domain where it helps coordinate assembly of the platform of the 30S subunit. The chain is Small ribosomal subunit protein uS8 from Flavobacterium johnsoniae (strain ATCC 17061 / DSM 2064 / JCM 8514 / BCRC 14874 / CCUG 350202 / NBRC 14942 / NCIMB 11054 / UW101) (Cytophaga johnsonae).